The primary structure comprises 231 residues: Ion-translocating oxidoreductase complex subunit E (231 aa).

Helical transmembrane passes span glycine 18–alanine 38, leucine 39–valine 59, isoleucine 69–alanine 89, asparagine 93–glycine 113, serine 127–alanine 147, leucine 157–tryptophan 177, and proline 182–leucine 202.

The protein belongs to the NqrDE/RnfAE family. As to quaternary structure, the complex is composed of six subunits: RnfA, RnfB, RnfC, RnfD, RnfE and RnfG.

It is found in the cell inner membrane. In terms of biological role, part of a membrane-bound complex that couples electron transfer with translocation of ions across the membrane. This is Ion-translocating oxidoreductase complex subunit E from Shewanella frigidimarina (strain NCIMB 400).